The sequence spans 499 residues: Histidine ammonia-lyase (499 aa).

Positions 142–144 form a cross-link, 5-imidazolinone (Ala-Gly); the sequence is ASG. 2,3-didehydroalanine (Ser) is present on Ser-143.

Belongs to the PAL/histidase family. In terms of processing, contains an active site 4-methylidene-imidazol-5-one (MIO), which is formed autocatalytically by cyclization and dehydration of residues Ala-Ser-Gly.

It localises to the cytoplasm. It carries out the reaction L-histidine = trans-urocanate + NH4(+). It functions in the pathway amino-acid degradation; L-histidine degradation into L-glutamate; N-formimidoyl-L-glutamate from L-histidine: step 1/3. In Staphylococcus saprophyticus subsp. saprophyticus (strain ATCC 15305 / DSM 20229 / NCIMB 8711 / NCTC 7292 / S-41), this protein is Histidine ammonia-lyase.